A 399-amino-acid polypeptide reads, in one-letter code: Delta(12) acyl-lipid conjugase (11E,13E-forming) (399 aa).

Positions 11-30 (RNGGGPKKKMGPGQGLGPGE) are disordered. Transmembrane regions (helical) follow at residues 61-81 (FSYL…ADTY) and 93-113 (LAWP…WGIA). Positions 114 to 118 (HDCGH) match the Histidine box-1 motif. Residues 126–146 (LVDDVVGFLIHSLVFVPYFSF) traverse the membrane as a helical segment. The Histidine box-2 motif lies at 150–154 (HRRHH). The next 3 membrane-spanning stretches (helical) occupy residues 188–208 (VFII…FNIS), 232–252 (VLVH…YRIA), and 258–278 (GWLI…VVLI). Residues 325–329 (HVVHH) carry the Histidine box-3 motif.

The protein belongs to the fatty acid desaturase type 1 family. Expressed in developing seeds, but not in leaves.

It localises to the membrane. It catalyses the reaction a (9Z,12Z)-octadecadienoyl-containing glycerolipid + 2 Fe(II)-[cytochrome b5] + O2 + 2 H(+) = a (9Z,11E,13E)-octadecatrienoyl-containing glycerolipid + 2 Fe(III)-[cytochrome b5] + 2 H2O. The enzyme catalyses (9Z,12Z,15Z)-octadecatrienoyl-containing glycerolipid + 2 Fe(II)-[cytochrome b5] + O2 + 2 H(+) = a (9Z,11E,13E,15Z)-octadecatetraenoyl-containing glycerolipid + 2 Fe(III)-[cytochrome b5] + 2 H2O. The protein operates within lipid metabolism; polyunsaturated fatty acid biosynthesis. Its function is as follows. Converts linoleic acid to alpha-eleostearic acid (18:3(9Z,11E,13E)) and alpha-linolenic acid to alpha-parinaric acid (18:4(9Z,11E, 13E, 15Z)). Converts a single cis double bond at carbon 12 to two conjugated trans bonds at positions 11 and 13. In Momordica charantia (Bitter gourd), this protein is Delta(12) acyl-lipid conjugase (11E,13E-forming).